The chain runs to 88 residues: Large ribosomal subunit protein bL31B (88 aa).

It belongs to the bacterial ribosomal protein bL31 family. Type B subfamily. As to quaternary structure, part of the 50S ribosomal subunit.

This is Large ribosomal subunit protein bL31B from Nocardia farcinica (strain IFM 10152).